The following is a 126-amino-acid chain: Prostate and testis expressed protein 1 (126 aa).

The signal sequence occupies residues 1–21 (MDKSLLLELPILLCCFRALSG). The 80-residue stretch at 46 to 125 (VQCRMCHLQF…CRSHDLCNED (80 aa)) folds into the UPAR/Ly6 domain. 4 disulfide bridges follow: Cys-48-Cys-75, Cys-51-Cys-60, Cys-67-Cys-94, and Cys-98-Cys-115.

Belongs to the PATE family. Expressed specifically in prostate cancer, normal prostate, and testis. Expressed in the epithelial cells of the prostate cancer and normal prostate tissues.

The protein resides in the secreted. The polypeptide is Prostate and testis expressed protein 1 (PATE1) (Homo sapiens (Human)).